The following is a 2179-amino-acid chain: Genome polyprotein (2179 aa).

The interval 1–20 (MGAQVSTQKSGSHENQNILT) is disordered. Gly2 carries N-myristoyl glycine; by host lipidation. Residues 2-1491 (GAQVSTQKSG…AMNQASMIIN (1490 aa)) are Cytoplasmic-facing. An amphipathic alpha-helix region spans residues 564–584 (ALTEGLGDELEEVIVEKTKQT). Catalysis depends on for protease 2A activity residues His876 and Asp894. Zn(2+)-binding residues include Cys911 and Cys913. Residue Cys965 is the For protease 2A activity of the active site. Positions 971 and 973 each coordinate Zn(2+). A membrane-binding region spans residues 1101-1173 (NDGWFRKFND…HISNPTQEKR (73 aa)). An oligomerization region spans residues 1101–1239 (NDGWFRKFND…TPGSGKSLTT (139 aa)). The segment at 1122-1126 (ANKIS) is RNA-binding. Residues 1205 to 1361 (KNKMVNYMQF…TTYTKNGKLN (157 aa)) form the SF3 helicase domain. Zn(2+) contacts are provided by Cys1369, Cys1372, Cys1381, and Cys1386. Residues 1369–1386 (CKDCHQPSNFKKCCPLVC) form a C4-type zinc finger. Residues 1413 to 1420 (DFKSKMQI) are RNA-binding. Positions 1424-1429 (LETLFQ) are oligomerization. Residues 1492-1507 (TILMFVSTLGIVYVIY) lie within the membrane without spanning it. The Cytoplasmic portion of the chain corresponds to 1508-2179 (KLFAQTQGPY…VLRRRWLDLF (672 aa)). Tyr1517 is subject to O-(5'-phospho-RNA)-tyrosine. The Peptidase C3 domain maps to 1538 to 1715 (GPNTEFALSL…FSAQLKKQYF (178 aa)). Active-site for protease 3C activity residues include His1577, Glu1608, and Cys1683. Residues 1946-2060 (GHLMAFDYSN…SYPYELDPQV (115 aa)) form the RdRp catalytic domain. Mg(2+) is bound by residues Asp1952 and Asp2046.

This sequence belongs to the picornaviruses polyprotein family. Interacts with capsid protein VP1 and capsid protein VP3 to form heterotrimeric protomers. As to quaternary structure, interacts with capsid protein VP0, and capsid protein VP3 to form heterotrimeric protomers. Five protomers subsequently associate to form pentamers which serve as building blocks for the capsid. Interacts with capsid protein VP2, capsid protein VP3 and capsid protein VP4 following cleavage of capsid protein VP0. Interacts with host ICAM1. In terms of assembly, interacts with capsid protein VP1 and capsid protein VP3 in the mature capsid. Interacts with capsid protein VP0 and capsid protein VP1 to form heterotrimeric protomers. Five protomers subsequently associate to form pentamers which serve as building blocks for the capsid. Interacts with capsid protein VP4 in the mature capsid. Interacts with protein 2C; this interaction may be important for virion morphogenesis. As to quaternary structure, interacts with capsid protein VP1 and capsid protein VP3. In terms of assembly, homodimer. Homohexamer; forms a hexameric ring structure with 6-fold symmetry characteristic of AAA+ ATPases. Interacts (via N-terminus) with host RTN3 (via reticulon domain); this interaction is important for viral replication. Interacts with capsid protein VP3; this interaction may be important for virion morphogenesis. As to quaternary structure, interacts with protein 3CD. In terms of assembly, homodimer. Interacts with host GBF1. Interacts (via GOLD domain) with host ACBD3 (via GOLD domain); this interaction allows the formation of a viral protein 3A/ACBD3 heterotetramer with a 2:2 stoichiometry, which will stimulate the recruitment of host PI4KB in order to synthesize PI4P at the viral RNA replication sites. Interacts with RNA-directed RNA polymerase. As to quaternary structure, interacts with protein 3AB and with RNA-directed RNA polymerase. In terms of assembly, interacts with Viral protein genome-linked and with protein 3CD. Mg(2+) serves as cofactor. Post-translationally, specific enzymatic cleavages in vivo by the viral proteases yield processing intermediates and the mature proteins. Myristoylation is required for the formation of pentamers during virus assembly. Further assembly of 12 pentamers and a molecule of genomic RNA generates the provirion. In terms of processing, during virion maturation, immature virions are rendered infectious following cleavage of VP0 into VP4 and VP2. This maturation seems to be an autocatalytic event triggered by the presence of RNA in the capsid and it is followed by a conformational change infectious virion. Post-translationally, myristoylation is required during RNA encapsidation and formation of the mature virus particle. VPg is uridylylated by the polymerase into VPg-pUpU. This acts as a nucleotide-peptide primer for the genomic RNA replication.

The protein localises to the virion. The protein resides in the host cytoplasm. Its subcellular location is the host cytoplasmic vesicle membrane. It is found in the host nucleus. The enzyme catalyses a ribonucleoside 5'-triphosphate + H2O = a ribonucleoside 5'-diphosphate + phosphate + H(+). It carries out the reaction Selective cleavage of Tyr-|-Gly bond in the picornavirus polyprotein.. The catalysed reaction is RNA(n) + a ribonucleoside 5'-triphosphate = RNA(n+1) + diphosphate. It catalyses the reaction Selective cleavage of Gln-|-Gly bond in the poliovirus polyprotein. In other picornavirus reactions Glu may be substituted for Gln, and Ser or Thr for Gly.. With respect to regulation, replication or transcription is subject to high level of random mutations by the nucleotide analog ribavirin. Forms an icosahedral capsid of pseudo T=3 symmetry with capsid proteins VP2 and VP3. The capsid is 300 Angstroms in diameter, composed of 60 copies of each capsid protein and enclosing the viral positive strand RNA genome. Capsid protein VP1 mainly forms the vertices of the capsid. Capsid protein VP1 interacts with host ICAM1 to provide virion attachment to target host cells. This attachment induces virion internalization. Tyrosine kinases are probably involved in the entry process. After binding to its receptor, the capsid undergoes conformational changes. Capsid protein VP1 N-terminus (that contains an amphipathic alpha-helix) and capsid protein VP4 are externalized. Together, they shape a pore in the host membrane through which viral genome is translocated to host cell cytoplasm. After genome has been released, the channel shrinks. Its function is as follows. Forms an icosahedral capsid of pseudo T=3 symmetry with capsid proteins VP2 and VP3. The capsid is 300 Angstroms in diameter, composed of 60 copies of each capsid protein and enclosing the viral positive strand RNA genome. In terms of biological role, lies on the inner surface of the capsid shell. After binding to the host receptor, the capsid undergoes conformational changes. Capsid protein VP4 is released, Capsid protein VP1 N-terminus is externalized, and together, they shape a pore in the host membrane through which the viral genome is translocated into the host cell cytoplasm. Functionally, component of immature procapsids, which is cleaved into capsid proteins VP4 and VP2 after maturation. Allows the capsid to remain inactive before the maturation step. Cysteine protease that cleaves viral polyprotein and specific host proteins. It is responsible for the autocatalytic cleavage between the P1 and P2 regions, which is the first cleavage occurring in the polyprotein. Also cleaves the host translation initiation factor EIF4G1, in order to shut down the capped cellular mRNA translation. Inhibits the host nucleus-cytoplasm protein and RNA trafficking by cleaving host members of the nuclear pores including NUP62 and NUP153. Counteracts stress granule formation probably by antagonizing its assembly or promoting its dissassembly. Its function is as follows. Plays an essential role in the virus replication cycle by acting as a viroporin. Creates a pore in the host endoplasmic reticulum and as a consequence releases Ca2+ in the cytoplasm of infected cell. In turn, high levels of cytoplasmic calcium may trigger membrane trafficking and transport of viral ER-associated proteins to viroplasms, sites of viral genome replication. In terms of biological role, induces and associates with structural rearrangements of intracellular membranes. Displays RNA-binding, nucleotide binding and NTPase activities. May play a role in virion morphogenesis and viral RNA encapsidation by interacting with the capsid protein VP3. Functionally, localizes the viral replication complex to the surface of membranous vesicles. Together with protein 3CD binds the Cis-Active RNA Element (CRE) which is involved in RNA synthesis initiation. Acts as a cofactor to stimulate the activity of 3D polymerase, maybe through a nucleid acid chaperone activity. Localizes the viral replication complex to the surface of membranous vesicles. It inhibits host cell endoplasmic reticulum-to-Golgi apparatus transport and causes the disassembly of the Golgi complex, possibly through GBF1 interaction. This would result in depletion of MHC, trail receptors and IFN receptors at the host cell surface. Plays an essential role in viral RNA replication by recruiting ACBD3 and PI4KB at the viral replication sites, thereby allowing the formation of the rearranged membranous structures where viral replication takes place. Its function is as follows. Acts as a primer for viral RNA replication and remains covalently bound to viral genomic RNA. VPg is uridylylated prior to priming replication into VPg-pUpU. The oriI viral genomic sequence may act as a template for this. The VPg-pUpU is then used as primer on the genomic RNA poly(A) by the RNA-dependent RNA polymerase to replicate the viral genome. During genome replication, the VPg-RNA linkage is removed by the host TDP2, thereby accelerating replication. During the late stage of the replication cycle, host TDP2 is excluded from sites of viral RNA synthesis and encapsidation, allowing for the generation of progeny virions. In terms of biological role, involved in the viral replication complex and viral polypeptide maturation. It exhibits protease activity with a specificity and catalytic efficiency that is different from protease 3C. Protein 3CD lacks polymerase activity. Protein 3CD binds to the 5'UTR of the viral genome. Functionally, major viral protease that mediates proteolytic processing of the polyprotein. Cleaves host EIF5B, contributing to host translation shutoff. Cleaves also host PABPC1, contributing to host translation shutoff. Cleaves host NLRP1, triggers host N-glycine-mediated degradation of the autoinhibitory NLRP1 N-terminal fragment. Replicates the viral genomic RNA on the surface of intracellular membranes. May form linear arrays of subunits that propagate along a strong head-to-tail interaction called interface-I. Covalently attaches UMP to a tyrosine of VPg, which is used to prime RNA synthesis. The positive stranded RNA genome is first replicated at virus induced membranous vesicles, creating a dsRNA genomic replication form. This dsRNA is then used as template to synthesize positive stranded RNA genomes. ss(+)RNA genomes are either translated, replicated or encapsidated. This Homo sapiens (Human) protein is Genome polyprotein.